The following is a 408-amino-acid chain: Aspartokinase 2 (408 aa).

An ATP-binding site is contributed by 7–10 (KFGG). A substrate-binding site is contributed by 25-30 (RAIAEK). Serine 41 contacts ATP. Substrate is bound by residues 47 to 49 (TDE), glutamate 74, 125 to 126 (LE), 150 to 153 (RGGS), and serine 153. Residues 173-174 (TD) and 179-184 (FTTDPR) each bind ATP. 2 ACT domains span residues 264 to 337 (VTIY…TESK) and 343 to 408 (IVGS…PSAV). Residues 289–291 (NVD), glutamine 295, 354–355 (VA), 368–369 (LI), and 375–376 (SE) contribute to the substrate site.

Belongs to the aspartokinase family. Tetramer consisting of 2 isoforms Alpha (catalytic and regulation) and of a homodimer of 2 isoforms Beta (regulation).

The catalysed reaction is L-aspartate + ATP = 4-phospho-L-aspartate + ADP. It participates in amino-acid biosynthesis; L-lysine biosynthesis via DAP pathway; (S)-tetrahydrodipicolinate from L-aspartate: step 1/4. The protein operates within amino-acid biosynthesis; L-methionine biosynthesis via de novo pathway; L-homoserine from L-aspartate: step 1/3. It functions in the pathway amino-acid biosynthesis; L-threonine biosynthesis; L-threonine from L-aspartate: step 1/5. Lysine-sensitive. Regulated by degradation in response to starvation of cells for various nutrients. Ammonium starvation induced the fastest aspartokinase II decline, followed by amino acid starvation and glucose limitation. In terms of biological role, catalyzes the phosphorylation of the beta-carboxyl group of aspartic acid with ATP to yield 4-phospho-L-aspartate, which is involved in the branched biosynthetic pathway leading to the biosynthesis of amino acids threonine, isoleucine and methionine. This Bacillus subtilis (strain 168) protein is Aspartokinase 2 (lysC).